Here is a 265-residue protein sequence, read N- to C-terminus: Deoxyribose-phosphate aldolase 2 (265 aa).

Asp108 functions as the Proton donor/acceptor in the catalytic mechanism. The active-site Schiff-base intermediate with acetaldehyde is Lys173. Residue Lys207 is the Proton donor/acceptor of the active site.

It belongs to the DeoC/FbaB aldolase family. DeoC type 2 subfamily.

It is found in the cytoplasm. It catalyses the reaction 2-deoxy-D-ribose 5-phosphate = D-glyceraldehyde 3-phosphate + acetaldehyde. It participates in carbohydrate degradation; 2-deoxy-D-ribose 1-phosphate degradation; D-glyceraldehyde 3-phosphate and acetaldehyde from 2-deoxy-alpha-D-ribose 1-phosphate: step 2/2. Functionally, catalyzes a reversible aldol reaction between acetaldehyde and D-glyceraldehyde 3-phosphate to generate 2-deoxy-D-ribose 5-phosphate. This Yersinia pestis protein is Deoxyribose-phosphate aldolase 2 (deoC2).